The sequence spans 89 residues: Endoribonuclease VapD 1 (89 aa).

This sequence belongs to the VapD ribonuclease family. As to quaternary structure, homodimer.

In terms of biological role, cleaves ssRNA, mostly between U:A. This is Endoribonuclease VapD 1 from Riemerella anatipestifer (Moraxella anatipestifer).